Consider the following 347-residue polypeptide: NADH-ubiquinone oxidoreductase chain 2 (347 aa).

11 consecutive transmembrane segments (helical) span residues 3-23 (PMTS…VLMS), 25-45 (HWFM…PILM), 59-79 (YFLT…INLM), 96-116 (TLIT…FWVP), 122-142 (VSLS…LSLL), 149-169 (INTN…GWGG), 178-198 (IMAY…IYNP), 200-220 (LSLL…MLLI), 240-260 (ITTM…LTGF), 274-294 (NSVI…FFYM), and 326-346 (MTML…FISL).

The protein belongs to the complex I subunit 2 family. Core subunit of respiratory chain NADH dehydrogenase (Complex I) which is composed of 45 different subunits. Interacts with TMEM242.

It localises to the mitochondrion inner membrane. It catalyses the reaction a ubiquinone + NADH + 5 H(+)(in) = a ubiquinol + NAD(+) + 4 H(+)(out). Core subunit of the mitochondrial membrane respiratory chain NADH dehydrogenase (Complex I) which catalyzes electron transfer from NADH through the respiratory chain, using ubiquinone as an electron acceptor. Essential for the catalytic activity and assembly of complex I. The sequence is that of NADH-ubiquinone oxidoreductase chain 2 from Sylvisorex granti (Grant's forest shrew).